Consider the following 404-residue polypeptide: Lissencephaly-1 homolog (404 aa).

The LisH domain maps to 7-39; sequence QKEEINRAIAEYMQNNGYSESFSVFLKESSLSE. Positions 54–81 form a coiled coil; it reads TTVLRLQRKVNDLESKLQESQREINHGA. Residues 69–89 are compositionally biased toward basic and acidic residues; the sequence is KLQESQREINHGAPTRDKRQA. A disordered region spans residues 69–90; sequence KLQESQREINHGAPTRDKRQAA. 7 WD repeats span residues 104-145, 146-185, 189-228, 231-270, 273-327, 330-369, and 372-404; these read GHRL…RTLK, GHTDAVNDIAIDAAGKQLVSCSSDLSIKLWDFGQTYDCLK, GHEHTVSSVTFLPTGDFVLSASRDHTIKQWDISTGYCVYT, GHNDWVRMIRISNDGTLFASASLDQTVTVWSFATKSAKLV, DHEH…VLFT, AHENWVRGLAFHPKGKYLISVADDKTLRVWELSAQRCMKA, and AHEHFVSTVAFHQTSPFVITGSVDMSCKVWECR.

The protein belongs to the WD repeat LIS1/nudF family. Component of a dynein-regulating complex composed of at least lis-1 and nud-2. Interacts with nud-2; the interaction is direct. As to expression, expressed in all classes of neurons in the ventral cord. Expressed in the multinucleate spermathecal valves and adult seam cells.

The protein resides in the cytoplasm. It localises to the cytoskeleton. Its subcellular location is the microtubule organizing center. The protein localises to the centrosome. It is found in the chromosome. The protein resides in the centromere. It localises to the kinetochore. Its subcellular location is the nucleus envelope. Positively regulates the activity of the minus-end directed microtubule motor protein dynein. May enhance dynein-mediated microtubule sliding by targeting dynein to the microtubule plus end. Required for several dynein- and microtubule-dependent processes such as nuclear migration during cell division. Part of a complex with nud-2, which is recruited to the nuclear envelope by unc-83, where, in turn, it recruits dynein to the nuclear surface and regulates nuclear migration in hypodermal precursor cells. Plays a role in GABAergic synaptic vesicle localization in the ventral nerve cord. Required for neuronal cell differentiation. This is Lissencephaly-1 homolog from Caenorhabditis elegans.